The following is a 371-amino-acid chain: Anhydro-N-acetylmuramic acid kinase (371 aa).

12 to 20 contacts ATP; sequence GTVLDGNID.

It belongs to the anhydro-N-acetylmuramic acid kinase family.

The enzyme catalyses 1,6-anhydro-N-acetyl-beta-muramate + ATP + H2O = N-acetyl-D-muramate 6-phosphate + ADP + H(+). The protein operates within amino-sugar metabolism; 1,6-anhydro-N-acetylmuramate degradation. It functions in the pathway cell wall biogenesis; peptidoglycan recycling. Catalyzes the specific phosphorylation of 1,6-anhydro-N-acetylmuramic acid (anhMurNAc) with the simultaneous cleavage of the 1,6-anhydro ring, generating MurNAc-6-P. Is required for the utilization of anhMurNAc either imported from the medium or derived from its own cell wall murein, and thus plays a role in cell wall recycling. The chain is Anhydro-N-acetylmuramic acid kinase from Mesorhizobium japonicum (strain LMG 29417 / CECT 9101 / MAFF 303099) (Mesorhizobium loti (strain MAFF 303099)).